Consider the following 328-residue polypeptide: DNA-directed RNA polymerase subunit alpha (328 aa).

An alpha N-terminal domain (alpha-NTD) region spans residues 1-231 (MIYQMQMPAK…EHVTFFANFS (231 aa)). Residues 247–328 (DEFETMRRLL…MDITRYQMKG (82 aa)) form an alpha C-terminal domain (alpha-CTD) region.

This sequence belongs to the RNA polymerase alpha chain family. Homodimer. The RNAP catalytic core consists of 2 alpha, 1 beta, 1 beta' and 1 omega subunit. When a sigma factor is associated with the core the holoenzyme is formed, which can initiate transcription.

The catalysed reaction is RNA(n) + a ribonucleoside 5'-triphosphate = RNA(n+1) + diphosphate. Its function is as follows. DNA-dependent RNA polymerase catalyzes the transcription of DNA into RNA using the four ribonucleoside triphosphates as substrates. In Chlorobium luteolum (strain DSM 273 / BCRC 81028 / 2530) (Pelodictyon luteolum), this protein is DNA-directed RNA polymerase subunit alpha.